Consider the following 654-residue polypeptide: Pyoverdine export ATP-binding/permease protein PvdT (654 aa).

The ABC transporter domain occupies 6–245 (IELCDIRKAY…QPEQLQANDL (240 aa)). 43–50 (GASGSGKS) provides a ligand contact to ATP. Transmembrane regions (helical) follow at residues 282 to 302 (ALTL…LAVG), 529 to 549 (LSLM…IGVM), 596 to 616 (IVIA…VAFA), and 617 to 637 (LPAI…FGFM).

It belongs to the ABC transporter superfamily. Macrolide exporter (TC 3.A.1.122) family. In terms of assembly, part of the tripartite efflux system PvdRT-OpmQ, which is composed of an inner membrane component with both ATPase and permease domains, PvdT, a periplasmic membrane fusion protein, PvdR, and an outer membrane component, OpmQ.

Its subcellular location is the cell inner membrane. Functionally, part of the tripartite efflux system PvdRT-OpmQ required for the secretion into the extracellular milieu of the siderophore pyoverdine (PVD), which is involved in iron acquisition. This subunit binds PVD and drives its secretion by hydrolyzing ATP. The system is responsible for export of newly synthesized PVD after the final steps of biosynthesis have taken place in the periplasm. It is also responsible for recycling of PVD after internalization of ferri-PVD into the periplasm by the outer-membrane receptor FpvA and release of iron from PVD, thus making PVD available for new cycles of iron uptake. This is Pyoverdine export ATP-binding/permease protein PvdT from Pseudomonas entomophila (strain L48).